A 664-amino-acid chain; its full sequence is DNA ligase (664 aa).

Residues 32–36 (DKDYD) and 80–81 (SL) contribute to the NAD(+) site. Lys122 acts as the N6-AMP-lysine intermediate in catalysis. Positions 144, 178, and 314 each coordinate NAD(+). 4 residues coordinate Zn(2+): Cys407, Cys410, Cys423, and Cys429. Positions 587-664 (IKENIFNGKT…SEEDFKNMIG (78 aa)) constitute a BRCT domain.

This sequence belongs to the NAD-dependent DNA ligase family. LigA subfamily. Mg(2+) is required as a cofactor. Mn(2+) serves as cofactor.

It carries out the reaction NAD(+) + (deoxyribonucleotide)n-3'-hydroxyl + 5'-phospho-(deoxyribonucleotide)m = (deoxyribonucleotide)n+m + AMP + beta-nicotinamide D-nucleotide.. Functionally, DNA ligase that catalyzes the formation of phosphodiester linkages between 5'-phosphoryl and 3'-hydroxyl groups in double-stranded DNA using NAD as a coenzyme and as the energy source for the reaction. It is essential for DNA replication and repair of damaged DNA. The polypeptide is DNA ligase (Clostridium novyi (strain NT)).